The following is a 200-amino-acid chain: Holliday junction branch migration complex subunit RuvA (200 aa).

Positions 1 to 65 (MYEYIKGTLT…ETEHVLYGFS (65 aa)) are domain I. Positions 66 to 144 (SRAERECFRL…TLMPLYLEEP (79 aa)) are domain II. Residues 145-149 (VVPSS) are flexible linker. Residues 150 to 200 (TANSSFKEGIGALMNLGFSRLAADRMMTEAVKELSEEASVAELLPIALRKS) are domain III.

Belongs to the RuvA family. In terms of assembly, homotetramer. Forms an RuvA(8)-RuvB(12)-Holliday junction (HJ) complex. HJ DNA is sandwiched between 2 RuvA tetramers; dsDNA enters through RuvA and exits via RuvB. An RuvB hexamer assembles on each DNA strand where it exits the tetramer. Each RuvB hexamer is contacted by two RuvA subunits (via domain III) on 2 adjacent RuvB subunits; this complex drives branch migration. In the full resolvosome a probable DNA-RuvA(4)-RuvB(12)-RuvC(2) complex forms which resolves the HJ.

Its subcellular location is the cytoplasm. In terms of biological role, the RuvA-RuvB-RuvC complex processes Holliday junction (HJ) DNA during genetic recombination and DNA repair, while the RuvA-RuvB complex plays an important role in the rescue of blocked DNA replication forks via replication fork reversal (RFR). RuvA specifically binds to HJ cruciform DNA, conferring on it an open structure. The RuvB hexamer acts as an ATP-dependent pump, pulling dsDNA into and through the RuvAB complex. HJ branch migration allows RuvC to scan DNA until it finds its consensus sequence, where it cleaves and resolves the cruciform DNA. The chain is Holliday junction branch migration complex subunit RuvA from Chlamydia trachomatis serovar L2 (strain ATCC VR-902B / DSM 19102 / 434/Bu).